Reading from the N-terminus, the 406-residue chain is Probable 2,3-bisphosphoglycerate-independent phosphoglycerate mutase (406 aa).

Belongs to the BPG-independent phosphoglycerate mutase family. A-PGAM subfamily.

The catalysed reaction is (2R)-2-phosphoglycerate = (2R)-3-phosphoglycerate. It participates in carbohydrate degradation; glycolysis; pyruvate from D-glyceraldehyde 3-phosphate: step 3/5. In terms of biological role, catalyzes the interconversion of 2-phosphoglycerate and 3-phosphoglycerate. The chain is Probable 2,3-bisphosphoglycerate-independent phosphoglycerate mutase from Thermus thermophilus (strain ATCC BAA-163 / DSM 7039 / HB27).